Reading from the N-terminus, the 873-residue chain is MTEDKAEKVMPEETAFEEIEKDFQEVLSELSGDKSLEKFRTEYEKLHSIMKKSYENEKRLMAKCRELNAEIVVNSAKVATALKLSQDDQTTIASLKKEIEKAWKMVDSAYDKEQKAKETILALKEEIVNLTKLVEQGSGLSMDQDSNIRDLLKFKEEVTKERDQLLSEVVKLRENLAQTIEKQQAAEHAKEEAEMAISQFQQEIQHRQNEASRESRKKEKLEKELRQIQTDMDGRQAEIKAMQQYMHKSKEELQRLEQQLKEQKILNERAAKEVEQFQMRNAKLQQENDQHTLTCEQLSQENQQKALELKAKEDEIHQMRLDLGKLNKIREQIHKKLHQLDDQKAEVEQQKDTLKNQILGLEREVESSKKQAELDKKAMEELLRERDILNKNMLKAVSATQKQVDLVKLHEQAKKNLEEEIQNYKDEAQKQRKIIFQLEKERDRYINEASDLTQRVLANMEDIKVREIQIFDYRKKIAESETKLKQQQNLYEAVRSDRNLYSKNLVEAQDEITEMKRKLKIMTHQVDQLKEEISAKEAALVKLHLEQQRIEKEKETLKAELQKLRQQALETKHFIEKQEVEERKLLRIIAEADGERVRQKKELDQVISERDILGSQLVRRNDELALLYEKIKIQQSVLNKGETQYNQRVEDMRILKLEIKKLRREKGILARSVANVEELRQELYHMQREFLKERTRCRALEEELENPMNVHRWRKLEASDPSTFELIQKIHTLQKRLISKTEEVVEKELLLQEKEKLYVELKHILARQPGPEAAEQLQIYRHTLREKTKQLKVLSSELNMYESQSQEYKYEIERLGNELMSLKKKYLAQKRKELVLKNKDRMSMNNIFSETKKSVPRFTGGGFPLHQATKVKF.

Coiled coils occupy residues 106 to 609 and 642 to 832; these read VDSA…VISE and ETQY…QKRK. Positions 202–221 are disordered; it reads QEIQHRQNEASRESRKKEKL. Basic and acidic residues predominate over residues 204-221; sequence IQHRQNEASRESRKKEKL.

This sequence belongs to the CFAP58 family. As to quaternary structure, interacts with ODFP2. In terms of tissue distribution, predominantly expressed in the testis. Also found at lower levels in ciliated cells and tissues such as neural progenitor cells and oviducts.

The protein resides in the cell projection. It is found in the cilium. Its subcellular location is the flagellum. The protein localises to the cytoplasm. It localises to the cytoskeleton. The protein resides in the microtubule organizing center. It is found in the centrosome. In terms of biological role, has an essential role in the assembly and organization of the sperm flagellar axoneme. Required for the elongation of the primary cilium and sperm flagellar midpiece via modulation of the Notch signaling pathway. This is Cilia- and flagella-associated protein 58 from Mus musculus (Mouse).